The sequence spans 234 residues: Endonuclease V (234 aa).

Mg(2+) contacts are provided by Asp46 and Asp116.

Belongs to the endonuclease V family. Requires Mg(2+) as cofactor.

It is found in the cytoplasm. The enzyme catalyses Endonucleolytic cleavage at apurinic or apyrimidinic sites to products with a 5'-phosphate.. DNA repair enzyme involved in the repair of deaminated bases. Selectively cleaves double-stranded DNA at the second phosphodiester bond 3' to a deoxyinosine leaving behind the intact lesion on the nicked DNA. In Clostridium acetobutylicum (strain ATCC 824 / DSM 792 / JCM 1419 / IAM 19013 / LMG 5710 / NBRC 13948 / NRRL B-527 / VKM B-1787 / 2291 / W), this protein is Endonuclease V.